Reading from the N-terminus, the 121-residue chain is Putative membrane protein insertion efficiency factor (121 aa).

A disordered region spans residues 97 to 121 (VPARRDRHAGGRRCCPANVDEQRST).

The protein belongs to the UPF0161 family.

The protein localises to the cell membrane. In terms of biological role, could be involved in insertion of integral membrane proteins into the membrane. This is Putative membrane protein insertion efficiency factor from Rhodococcus jostii (strain RHA1).